A 213-amino-acid polypeptide reads, in one-letter code: N-(5'-phosphoribosyl)anthranilate isomerase (213 aa).

This sequence belongs to the TrpF family.

The enzyme catalyses N-(5-phospho-beta-D-ribosyl)anthranilate = 1-(2-carboxyphenylamino)-1-deoxy-D-ribulose 5-phosphate. Its pathway is amino-acid biosynthesis; L-tryptophan biosynthesis; L-tryptophan from chorismate: step 3/5. This chain is N-(5'-phosphoribosyl)anthranilate isomerase, found in Rhodopseudomonas palustris (strain TIE-1).